We begin with the raw amino-acid sequence, 593 residues long: Probable tripeptidyl-peptidase SED3 (593 aa).

Positions 1 to 18 (MLLRWHSVIPLFLTMTVA) are cleaved as a signal peptide. Positions 19-198 (LPNTYRTVVE…SLQVIYSSTN (180 aa)) are cleaved as a propeptide — removed in mature form. Residues Asn-198, Asn-204, Asn-261, and Asn-275 are each glycosylated (N-linked (GlcNAc...) asparagine). Residues 206 to 592 (TITPRCLREL…RILAKIVQHM (387 aa)) form the Peptidase S53 domain. Active-site charge relay system residues include Glu-282 and Asp-286. Asn-295 carries an N-linked (GlcNAc...) asparagine glycan. Catalysis depends on Ser-496, which acts as the Charge relay system. 2 residues coordinate Ca(2+): Asp-538 and Ile-539. Asn-554 and Asn-566 each carry an N-linked (GlcNAc...) asparagine glycan. Ca(2+) contacts are provided by Gly-570 and Asp-572.

The cofactor is Ca(2+).

It is found in the secreted. It localises to the extracellular space. The enzyme catalyses Release of an N-terminal tripeptide from a polypeptide.. Functionally, secreted tripeptidyl-peptidase which degrades proteins at acidic pHs and is involved in virulence. This Trichophyton verrucosum (strain HKI 0517) protein is Probable tripeptidyl-peptidase SED3 (SED3).